A 253-amino-acid polypeptide reads, in one-letter code: Indole-3-glycerol phosphate synthase (253 aa).

It belongs to the TrpC family.

The catalysed reaction is 1-(2-carboxyphenylamino)-1-deoxy-D-ribulose 5-phosphate + H(+) = (1S,2R)-1-C-(indol-3-yl)glycerol 3-phosphate + CO2 + H2O. Its pathway is amino-acid biosynthesis; L-tryptophan biosynthesis; L-tryptophan from chorismate: step 4/5. The sequence is that of Indole-3-glycerol phosphate synthase from Bacillus anthracis (strain A0248).